Reading from the N-terminus, the 310-residue chain is Protein N-terminal asparagine amidohydrolase (310 aa).

In terms of assembly, monomer.

The protein localises to the cytoplasm. It catalyses the reaction N-terminal L-asparaginyl-[protein] + H2O + H(+) = N-terminal L-aspartyl-[protein] + NH4(+). N-terminal asparagine deamidase that mediates deamidation of N-terminal asparagine residues to aspartate. Required for the ubiquitin-dependent turnover of intracellular proteins that initiate with Met-Asn. These proteins are acetylated on the retained initiator methionine and can subsequently be modified by the removal of N-acetyl methionine by acylaminoacid hydrolase (AAH). Conversion of the resulting N-terminal asparagine to aspartate by NTAN1/PNAD renders the protein susceptible to arginylation, polyubiquitination and degradation as specified by the N-end rule. This enzyme does not act on substrates with internal or C-terminal asparagines and does not act on glutamine residues in any position. The protein is Protein N-terminal asparagine amidohydrolase of Mus musculus (Mouse).